Reading from the N-terminus, the 294-residue chain is Bifunctional protein FolD (294 aa).

Residues 166-168 (GRS), serine 191, and isoleucine 232 each bind NADP(+).

It belongs to the tetrahydrofolate dehydrogenase/cyclohydrolase family. Homodimer.

It catalyses the reaction (6R)-5,10-methylene-5,6,7,8-tetrahydrofolate + NADP(+) = (6R)-5,10-methenyltetrahydrofolate + NADPH. The catalysed reaction is (6R)-5,10-methenyltetrahydrofolate + H2O = (6R)-10-formyltetrahydrofolate + H(+). Its pathway is one-carbon metabolism; tetrahydrofolate interconversion. Functionally, catalyzes the oxidation of 5,10-methylenetetrahydrofolate to 5,10-methenyltetrahydrofolate and then the hydrolysis of 5,10-methenyltetrahydrofolate to 10-formyltetrahydrofolate. The chain is Bifunctional protein FolD from Bradyrhizobium sp. (strain ORS 278).